Here is a 229-residue protein sequence, read N- to C-terminus: ATP synthase subunit a (229 aa).

Transmembrane regions (helical) follow at residues 24 to 44, 45 to 65, 83 to 103, 117 to 137, 143 to 163, 177 to 199, and 206 to 228; these read RLCFIVYFNCLMLIFDFLLFC, LFDLYLFVGLCLFLLLWFMLF, LLFCIVFLLYIAFLFLFCFLC, FMDVFFIRFLLCFLECFSLLC, FLRLFCNLLSSHFLLLMFFDF, CYFILFIFVFCFCLLFYVFLYLL, and LQLFIFCNMILQLIMDFLLFLLF.

This sequence belongs to the ATPase A chain family. In terms of assembly, F-type ATPases have 2 components, CF(1) - the catalytic core - and CF(0) - the membrane proton channel. CF(1) has five subunits: alpha(3), beta(3), gamma(1), delta(1), epsilon(1). CF(0) has three main subunits: a, b and c.

The protein resides in the mitochondrion inner membrane. Its function is as follows. Mitochondrial membrane ATP synthase (F(1)F(0) ATP synthase or Complex V) produces ATP from ADP in the presence of a proton gradient across the membrane which is generated by electron transport complexes of the respiratory chain. F-type ATPases consist of two structural domains, F(1) - containing the extramembraneous catalytic core and F(0) - containing the membrane proton channel, linked together by a central stalk and a peripheral stalk. During catalysis, ATP synthesis in the catalytic domain of F(1) is coupled via a rotary mechanism of the central stalk subunits to proton translocation. Key component of the proton channel; it may play a direct role in the translocation of protons across the membrane. This chain is ATP synthase subunit a (ATP6), found in Trypanosoma brucei brucei.